Here is a 503-residue protein sequence, read N- to C-terminus: Puromycin resistance protein pur8 (503 aa).

Over 1 to 24 (MARKPDISAVPVESAACQGPDPRR) the chain is Cytoplasmic. A helical membrane pass occupies residues 25–45 (WWGLVVILAAQLLVVLDGTVV). Residues 46-64 (NIALPSVQRDLGMSDTSRQ) lie on the Extracellular side of the membrane. A helical transmembrane segment spans residues 65-85 (WVITAYTLAFGGLLLLGGRVA). The Cytoplasmic segment spans residues 86–92 (DAFGRRR). Residues 93 to 113 (IFAVGILGFGLASLLGGAAPD) form a helical membrane-spanning segment. The Extracellular portion of the chain corresponds to 114–122 (PGTLFLARA). The helical transmembrane segment at 123-143 (LQGVFAAALAPAALALINTLF) threads the bilayer. Topologically, residues 144 to 152 (TEPGERGKA) are cytoplasmic. Residues 153-173 (FGVYGAVSGGGAAVGLLAGGL) form a helical membrane-spanning segment. Over 174–181 (LTEYLDWR) the chain is Extracellular. The chain crosses the membrane as a helical span at residues 182 to 202 (WCLYVNAPVALLALLGCRLLP). At 203-212 (RDRRTGRAVR) the chain is on the cytoplasmic side. Residues 213–233 (LDLPGTLLGCGGLVAIVYAFA) traverse the membrane as a helical segment. Residues 234 to 241 (EAESGWGD) are Extracellular-facing. The chain crosses the membrane as a helical span at residues 242-262 (PLVVRLLVLGVLMLVAFALVE). The Cytoplasmic portion of the chain corresponds to 263-280 (RRVQDPLLPPGVVAHRVR). A helical membrane pass occupies residues 281-301 (GGSFLVVGLPQIGLFGLFLFL). Residues 302-313 (TYYLQGILDYSP) lie on the Extracellular side of the membrane. The chain crosses the membrane as a helical span at residues 314–334 (VLTGVAFLPLGLGIAVGSSLI). The Cytoplasmic segment spans residues 335–346 (AARLLPRTRPRT). A helical transmembrane segment spans residues 347-367 (LIVGALLAAAAGMALLTRLEP). Topologically, residues 368 to 371 (DTPQ) are extracellular. A helical membrane pass occupies residues 372–392 (VYLTHLLPAQILIGLGIGCMM). Topologically, residues 393-422 (MPAMHTATARVAPHEAGAAAAVVNSAQQVG) are cytoplasmic. A helical membrane pass occupies residues 423-443 (GALGVALLNTVSTGATAAYLA). Residues 444–461 (DHGTSPAATVDGTVHGYT) lie on the Extracellular side of the membrane. A helical membrane pass occupies residues 462-482 (VAIAFAVGVLLLTAVLAWVLI). At 483-503 (DSRTEAADETGSASVTPARPR) the chain is on the cytoplasmic side.

This sequence belongs to the major facilitator superfamily. EmrB family.

The protein resides in the cell membrane. Functionally, may be involved in active puromycin efflux energized by a proton-dependent electrochemical gradient. In addition, it could be implicated in secreting N-acetylpuromycin, the last intermediate of the puromycin biosynthesis pathway, to the environment. This is Puromycin resistance protein pur8 (pur8) from Streptomyces alboniger.